The primary structure comprises 297 residues: Ribonuclease HIII (297 aa).

Residues 81-297 (IPIIGTDEVG…NTKKAQALLK (217 aa)) form the RNase H type-2 domain. A divalent metal cation contacts are provided by D87, E88, and D192.

Belongs to the RNase HII family. RnhC subfamily. Requires Mn(2+) as cofactor. Mg(2+) serves as cofactor.

It is found in the cytoplasm. The catalysed reaction is Endonucleolytic cleavage to 5'-phosphomonoester.. In terms of biological role, endonuclease that specifically degrades the RNA of RNA-DNA hybrids. The protein is Ribonuclease HIII of Streptococcus agalactiae serotype Ia (strain ATCC 27591 / A909 / CDC SS700).